The following is a 168-amino-acid chain: MRWIGIDPGLCTTGFGIIDVDGQKLTYVASGTIESGDPAKRLGALYAGLKEVLETYRPESAAIEEVFLNVNPRSTLMLGQARGAVIAALVSEKLPVAEYSALRVKQAIVGTGRAAKPQVQEMVKRLLRLNRAPGTDASDALGVAICAAHHAQIPNVFSTTLTPKKRSK.

Residues Asp7, Glu64, and Asp136 contribute to the active site. The Mg(2+) site is built by Asp7, Glu64, and Asp136.

This sequence belongs to the RuvC family. In terms of assembly, homodimer which binds Holliday junction (HJ) DNA. The HJ becomes 2-fold symmetrical on binding to RuvC with unstacked arms; it has a different conformation from HJ DNA in complex with RuvA. In the full resolvosome a probable DNA-RuvA(4)-RuvB(12)-RuvC(2) complex forms which resolves the HJ. Requires Mg(2+) as cofactor.

The protein localises to the cytoplasm. The enzyme catalyses Endonucleolytic cleavage at a junction such as a reciprocal single-stranded crossover between two homologous DNA duplexes (Holliday junction).. Its function is as follows. The RuvA-RuvB-RuvC complex processes Holliday junction (HJ) DNA during genetic recombination and DNA repair. Endonuclease that resolves HJ intermediates. Cleaves cruciform DNA by making single-stranded nicks across the HJ at symmetrical positions within the homologous arms, yielding a 5'-phosphate and a 3'-hydroxyl group; requires a central core of homology in the junction. The consensus cleavage sequence is 5'-(A/T)TT(C/G)-3'. Cleavage occurs on the 3'-side of the TT dinucleotide at the point of strand exchange. HJ branch migration catalyzed by RuvA-RuvB allows RuvC to scan DNA until it finds its consensus sequence, where it cleaves and resolves the cruciform DNA. In Polynucleobacter necessarius subsp. necessarius (strain STIR1), this protein is Crossover junction endodeoxyribonuclease RuvC.